We begin with the raw amino-acid sequence, 54 residues long: uncharacterized protein (54 aa).

This is an uncharacterized protein from Dictyostelium discoideum (Social amoeba).